Here is a 139-residue protein sequence, read N- to C-terminus: S-adenosylmethionine decarboxylase proenzyme (139 aa).

The active-site Schiff-base intermediate with substrate; via pyruvic acid is S63. Pyruvic acid (Ser); by autocatalysis is present on S63. Catalysis depends on H68, which acts as the Proton acceptor; for processing activity. Catalysis depends on C83, which acts as the Proton donor; for catalytic activity.

It belongs to the prokaryotic AdoMetDC family. Type 1 subfamily. In terms of assembly, heterotetramer of two alpha and two beta chains arranged as a dimer of alpha/beta heterodimers. Pyruvate serves as cofactor. In terms of processing, is synthesized initially as an inactive proenzyme. Formation of the active enzyme involves a self-maturation process in which the active site pyruvoyl group is generated from an internal serine residue via an autocatalytic post-translational modification. Two non-identical subunits are generated from the proenzyme in this reaction, and the pyruvate is formed at the N-terminus of the alpha chain, which is derived from the carboxyl end of the proenzyme. The post-translation cleavage follows an unusual pathway, termed non-hydrolytic serinolysis, in which the side chain hydroxyl group of the serine supplies its oxygen atom to form the C-terminus of the beta chain, while the remainder of the serine residue undergoes an oxidative deamination to produce ammonia and the pyruvoyl group blocking the N-terminus of the alpha chain.

It catalyses the reaction S-adenosyl-L-methionine + H(+) = S-adenosyl 3-(methylsulfanyl)propylamine + CO2. It functions in the pathway amine and polyamine biosynthesis; S-adenosylmethioninamine biosynthesis; S-adenosylmethioninamine from S-adenosyl-L-methionine: step 1/1. Functionally, catalyzes the decarboxylation of S-adenosylmethionine to S-adenosylmethioninamine (dcAdoMet), the propylamine donor required for the synthesis of the polyamines spermine and spermidine from the diamine putrescine. The chain is S-adenosylmethionine decarboxylase proenzyme from Pyrococcus furiosus (strain ATCC 43587 / DSM 3638 / JCM 8422 / Vc1).